A 386-amino-acid chain; its full sequence is DNase toxin Tse7 (386 aa).

As to quaternary structure, interacts with Tsi7.

It carries out the reaction Endonucleolytic cleavage to 5'-phosphodinucleotide and 5'-phosphooligonucleotide end-products.. Functionally, type VI secretion exported toxin that via to its DNase activity induces growth arrest and ultimately DNA degradation within target cell. The activity is initially neutralized by a cognate immunity protein Tsi7. This is DNase toxin Tse7 from Pseudomonas aeruginosa (strain ATCC 15692 / DSM 22644 / CIP 104116 / JCM 14847 / LMG 12228 / 1C / PRS 101 / PAO1).